We begin with the raw amino-acid sequence, 831 residues long: Probable DNA-directed RNA polymerase (831 aa).

Residues Asp490, Lys560, and Asp738 contribute to the active site.

Belongs to the phage and mitochondrial RNA polymerase family.

The protein resides in the mitochondrion. The catalysed reaction is RNA(n) + a ribonucleoside 5'-triphosphate = RNA(n+1) + diphosphate. Functionally, DNA-dependent RNA polymerase catalyzes the transcription of DNA into RNA using the four ribonucleoside triphosphates as substrates. In Gelasinospora sp. (strain G114), this protein is Probable DNA-directed RNA polymerase.